Here is a 540-residue protein sequence, read N- to C-terminus: Chaperonin GroEL (540 aa).

Residues 29-32 (TLGP), 86-90 (DGTTT), Gly413, 476-478 (NAA), and Asp492 each bind ATP.

Belongs to the chaperonin (HSP60) family. Forms a cylinder of 14 subunits composed of two heptameric rings stacked back-to-back. Interacts with the co-chaperonin GroES.

The protein resides in the cytoplasm. It carries out the reaction ATP + H2O + a folded polypeptide = ADP + phosphate + an unfolded polypeptide.. Together with its co-chaperonin GroES, plays an essential role in assisting protein folding. The GroEL-GroES system forms a nano-cage that allows encapsulation of the non-native substrate proteins and provides a physical environment optimized to promote and accelerate protein folding. In Streptococcus sanguinis, this protein is Chaperonin GroEL.